Reading from the N-terminus, the 296-residue chain is Bifunctional protein FolD (296 aa).

Residues 166–168 (GRS), Ser195, and Thr236 contribute to the NADP(+) site.

This sequence belongs to the tetrahydrofolate dehydrogenase/cyclohydrolase family. In terms of assembly, homodimer.

It carries out the reaction (6R)-5,10-methylene-5,6,7,8-tetrahydrofolate + NADP(+) = (6R)-5,10-methenyltetrahydrofolate + NADPH. The catalysed reaction is (6R)-5,10-methenyltetrahydrofolate + H2O = (6R)-10-formyltetrahydrofolate + H(+). Its pathway is one-carbon metabolism; tetrahydrofolate interconversion. In terms of biological role, catalyzes the oxidation of 5,10-methylenetetrahydrofolate to 5,10-methenyltetrahydrofolate and then the hydrolysis of 5,10-methenyltetrahydrofolate to 10-formyltetrahydrofolate. The protein is Bifunctional protein FolD of Dehalococcoides mccartyi (strain CBDB1).